The following is a 1242-amino-acid chain: DNA-directed RNA polymerase RPB2 homolog (1242 aa).

The C4-type zinc finger occupies 1180–1201; the sequence is CRNCGEPAIYNASHPIYKCMNC.

The protein belongs to the RNA polymerase beta chain family. In terms of assembly, part of the viral DNA-directed RNA polymerase that consists of 8 polII-like subunits (RPB1, RPB2, RPB3, RPB5, RPB6, RPB7, RPB9, RPB10), a capping enzyme and a termination factor.

The protein localises to the host cytoplasm. It localises to the virion. It carries out the reaction RNA(n) + a ribonucleoside 5'-triphosphate = RNA(n+1) + diphosphate. Functionally, catalytic component of the DNA-directed RNA polymerase (RNAP) that catalyzes the transcription in the cytoplasm of viral DNA into RNA using the four ribonucleoside triphosphates as substrates. Forms the polymerase active center together with RPB1. Part of the core element with the central large cleft, the clamp element that moves to open and close the cleft and the jaws that are thought to grab the incoming DNA template. This African swine fever virus (isolate Pig/Kenya/KEN-50/1950) (ASFV) protein is DNA-directed RNA polymerase RPB2 homolog.